Reading from the N-terminus, the 380-residue chain is Erythronate-4-phosphate dehydrogenase (380 aa).

Substrate is bound by residues Ser-45 and Thr-66. Residues 126–127 (QV), Asp-146, Thr-175, 206–208 (ASR), and Asp-232 contribute to the NAD(+) site. The active site involves Arg-208. Glu-237 is an active-site residue. The active-site Proton donor is His-254. NAD(+) is bound at residue Gly-257. Tyr-258 is a substrate binding site.

This sequence belongs to the D-isomer specific 2-hydroxyacid dehydrogenase family. PdxB subfamily. Homodimer.

The protein resides in the cytoplasm. It carries out the reaction 4-phospho-D-erythronate + NAD(+) = (R)-3-hydroxy-2-oxo-4-phosphooxybutanoate + NADH + H(+). It participates in cofactor biosynthesis; pyridoxine 5'-phosphate biosynthesis; pyridoxine 5'-phosphate from D-erythrose 4-phosphate: step 2/5. Its function is as follows. Catalyzes the oxidation of erythronate-4-phosphate to 3-hydroxy-2-oxo-4-phosphonooxybutanoate. In Pseudomonas aeruginosa (strain UCBPP-PA14), this protein is Erythronate-4-phosphate dehydrogenase.